The following is a 1802-amino-acid chain: Bromodomain and WD repeat-containing protein 3 (1802 aa).

WD repeat units lie at residues 170-209, 213-251, 255-297, 307-347, 353-393, 400-452, 456-495, and 502-542; these read IKMH…IWAT, RLLA…VWCL, APVA…FWQW, RPVK…IYYL, EKIA…IWQY, SIVL…VWNS, QLLH…IWDL, and RNYF…LFGF. S693 and S703 each carry phosphoserine. Residues 768-910 form a disordered region; the sequence is KPSYTTQRND…PKQTRKKKGG (143 aa). Residues 785–795 are compositionally biased toward basic residues; sequence SLRRTQRKRQH. Over residues 796-817 the composition is skewed to polar residues; sequence TYQTRSNIEHNSQASCQNSGVQ. Acidic residues predominate over residues 818 to 829; sequence EDSDSSSEEDET. The span at 846 to 859 shows a compositional bias: low complexity; that stretch reads SESSSSDSSSEYSD. Phosphoserine is present on residues S885 and S886. Positions 889 to 898 are enriched in basic and acidic residues; the sequence is ENLKSLEERQ. A compositionally biased stretch (basic residues) spans 899 to 909; it reads KKPKQTRKKKG. A Bromo 1 domain is found at 1138–1245; sequence WGAHSRDEEC…DVLLRFIGDQ (108 aa). Disordered regions lie at residues 1262 to 1292, 1326 to 1361, 1438 to 1500, and 1520 to 1725; these read RNST…VKCR, RQPA…LSED, IQSQ…SPVS, and SSSS…RAKR. Acidic residues predominate over residues 1266 to 1278; that stretch reads DAEEDTEIVDLDS. The region spanning 1300–1430 is the Bromo 2 domain; that stretch reads CNPDAWKKQC…ALFESHIKNI (131 aa). Over residues 1441 to 1453 the composition is skewed to basic residues; the sequence is QKRRRPRYRKRLR. Over residues 1454 to 1468 the composition is skewed to low complexity; sequence SSSSSLSSSGAPSPK. Positions 1479–1499 are enriched in polar residues; that stretch reads KNDQNTSVSHARTSSPFSSPV. Low complexity predominate over residues 1520–1533; sequence SSSSFGGYSRSGNS. S1577 and S1579 each carry phosphoserine. Positions 1587 to 1600 are enriched in basic and acidic residues; sequence GEDKEKKETKEKSH. A compositionally biased stretch (low complexity) spans 1601–1626; it reads LSTSESGELGSSLSSESTCGSDSDSE. Over residues 1627 to 1643 the composition is skewed to basic and acidic residues; that stretch reads STSRTDQDYVDGDHDYS. Composition is skewed to basic residues over residues 1649 to 1666 and 1684 to 1697; these read RPKR…RNWK and RGGR…RGSR. S1763 bears the Phosphoserine mark.

As to expression, found in most adult tissues. Down-regulated in a majority of the B-CLL cases examined.

Plays a role in the regulation of cell morphology and cytoskeletal organization. Required in the control of cell shape. In Homo sapiens (Human), this protein is Bromodomain and WD repeat-containing protein 3 (BRWD3).